A 237-amino-acid polypeptide reads, in one-letter code: Riboflavin kinase (237 aa).

Residues 1-101 are unknown; it reads MRLKIKAIWV…SRIFSSEPDV (101 aa). The riboflavin kinase stretch occupies residues 102–237; it reads LELEGNVLKG…VKKQGMEGQK (136 aa). 111 to 116 is a CDP binding site; that stretch reads GLGEGQ. Mg(2+) is bound by residues T140 and N142. FMN is bound by residues T197 and E205. Position 210–213 (210–213) interacts with CDP; the sequence is VKLR.

It belongs to the archaeal riboflavin kinase family. It depends on Mg(2+) as a cofactor.

It catalyses the reaction riboflavin + CTP = CDP + FMN + H(+). It functions in the pathway cofactor biosynthesis; FMN biosynthesis; FMN from riboflavin (CTP route): step 1/1. Functionally, catalyzes the CTP-dependent phosphorylation of riboflavin (vitamin B2) to form flavin mononucleotide (FMN). This Methanosarcina acetivorans (strain ATCC 35395 / DSM 2834 / JCM 12185 / C2A) protein is Riboflavin kinase (ribK).